A 577-amino-acid polypeptide reads, in one-letter code: Moesin (577 aa).

The FERM domain occupies 2–295; sequence PKTISVRVTT…GNHELYMRRR (294 aa). Residue Ser74 is modified to Phosphoserine. Position 79 is an N6-acetyllysine (Lys79). The residue at position 83 (Lys83) is an N6-succinyllysine. A [IL]-x-C-x-x-[DE] motif motif is present at residues 115 to 120; that stretch reads IYCPPE. Residue Tyr116 is modified to Phosphotyrosine. Residue Cys117 is modified to S-nitrosocysteine. An N6-acetyllysine mark is found at Lys139 and Lys165. Disordered stretches follow at residues 323-342, 375-409, and 466-518; these read LENE…KIER, LEQE…ASRD, and AMST…NERV. The segment covering 375–401 has biased composition (basic and acidic residues); it reads LEQERKRAQSEAEKLAKERQEAEEAKE. At Ser407 the chain carries Phosphoserine. Acidic residues predominate over residues 476–487; the sequence is AENEQDEQDENG. Residues 492 to 518 show a composition bias toward basic and acidic residues; sequence ADLRADAMAKDRSEEERTTEAEKNERV. Residue Ser527 is modified to Phosphoserine. Thr558 is modified (phosphothreonine; by ROCK2 and STK10).

In terms of assembly, in resting T-cells, part of a PAG1-NHERF1-MSN complex which is disrupted upon TCR activation. Interacts with NHERF1. Interacts with PPP1R16B. Interacts with SELPLG and SYK; these interactions mediate the activation of SYK by SELPLG. Interacts with PDPN (via cytoplasmic domain); this interaction activates RHOA and promotes epithelial-mesenchymal transition. Interacts with SPN/CD43 cytoplasmic tail. Interacts with CD44. Interacts with ICAM2. Interacts with ICAM3 (via C-terminus). Interacts with PDZD8. Interacts with F-actin. Interacts with CD46. Interacts with PTPN6. As to quaternary structure, (Microbial infection) Interacts with HIV-1 envelope protein gp120. Post-translationally, phosphorylation on Thr-558 is crucial for the formation of microvilli-like structures. Phosphorylation by ROCK2 suppresses the head-to-tail association of the N-terminal and C-terminal halves resulting in an opened conformation which is capable of actin and membrane-binding. Phosphorylation on Thr-558 by STK10 negatively regulates lymphocyte migration and polarization. S-nitrosylation of Cys-117 is induced by interferon-gamma and oxidatively-modified low-densitity lipoprotein (LDL(ox)) implicating the iNOS-S100A8/9 transnitrosylase complex. In terms of tissue distribution, in all tissues and cultured cells studied.

It is found in the cell membrane. Its subcellular location is the cytoplasm. The protein localises to the cytoskeleton. The protein resides in the apical cell membrane. It localises to the cell projection. It is found in the microvillus membrane. Its subcellular location is the microvillus. Its activity is regulated as follows. A head-to-tail association, of the N-terminal and C-terminal halves results in a closed conformation (inactive form) which is incapable of actin or membrane-binding. Its function is as follows. Ezrin-radixin-moesin (ERM) family protein that connects the actin cytoskeleton to the plasma membrane and thereby regulates the structure and function of specific domains of the cell cortex. Tethers actin filaments by oscillating between a resting and an activated state providing transient interactions between moesin and the actin cytoskeleton. Once phosphorylated on its C-terminal threonine, moesin is activated leading to interaction with F-actin and cytoskeletal rearrangement. These rearrangements regulate many cellular processes, including cell shape determination, membrane transport, and signal transduction. The role of moesin is particularly important in immunity acting on both T and B-cells homeostasis and self-tolerance, regulating lymphocyte egress from lymphoid organs. Modulates phagolysosomal biogenesis in macrophages. Also participates in immunologic synapse formation. This Homo sapiens (Human) protein is Moesin.